The following is a 453-amino-acid chain: Bifunctional protein GlmU (453 aa).

Positions 1 to 226 are pyrophosphorylase; that stretch reads MLDILILAAG…IQEVEGINNR (226 aa). UDP-N-acetyl-alpha-D-glucosamine-binding positions include 7–10, Lys-21, Gln-72, 77–78, 99–101, Gly-136, Glu-151, Asn-166, and Asn-224; these read LAAG, GT, and YGD. Asp-101 serves as a coordination point for Mg(2+). Position 224 (Asn-224) interacts with Mg(2+). The interval 227 to 247 is linker; sequence QQQATLERYYQQQQARALMDA. The N-acetyltransferase stretch occupies residues 248–453; the sequence is GVTLLDPARF…QGWERPTRKS (206 aa). Positions 330 and 348 each coordinate UDP-N-acetyl-alpha-D-glucosamine. The active-site Proton acceptor is His-360. UDP-N-acetyl-alpha-D-glucosamine is bound by residues Tyr-363 and Asn-374. Residues Ala-377, 383 to 384, Ser-402, Ala-420, and Arg-437 contribute to the acetyl-CoA site; that span reads NY.

It in the N-terminal section; belongs to the N-acetylglucosamine-1-phosphate uridyltransferase family. In the C-terminal section; belongs to the transferase hexapeptide repeat family. Homotrimer. The cofactor is Mg(2+).

It localises to the cytoplasm. It catalyses the reaction alpha-D-glucosamine 1-phosphate + acetyl-CoA = N-acetyl-alpha-D-glucosamine 1-phosphate + CoA + H(+). The catalysed reaction is N-acetyl-alpha-D-glucosamine 1-phosphate + UTP + H(+) = UDP-N-acetyl-alpha-D-glucosamine + diphosphate. Its pathway is nucleotide-sugar biosynthesis; UDP-N-acetyl-alpha-D-glucosamine biosynthesis; N-acetyl-alpha-D-glucosamine 1-phosphate from alpha-D-glucosamine 6-phosphate (route II): step 2/2. It functions in the pathway nucleotide-sugar biosynthesis; UDP-N-acetyl-alpha-D-glucosamine biosynthesis; UDP-N-acetyl-alpha-D-glucosamine from N-acetyl-alpha-D-glucosamine 1-phosphate: step 1/1. The protein operates within bacterial outer membrane biogenesis; LPS lipid A biosynthesis. Its function is as follows. Catalyzes the last two sequential reactions in the de novo biosynthetic pathway for UDP-N-acetylglucosamine (UDP-GlcNAc). The C-terminal domain catalyzes the transfer of acetyl group from acetyl coenzyme A to glucosamine-1-phosphate (GlcN-1-P) to produce N-acetylglucosamine-1-phosphate (GlcNAc-1-P), which is converted into UDP-GlcNAc by the transfer of uridine 5-monophosphate (from uridine 5-triphosphate), a reaction catalyzed by the N-terminal domain. The chain is Bifunctional protein GlmU from Cellvibrio japonicus (strain Ueda107) (Pseudomonas fluorescens subsp. cellulosa).